We begin with the raw amino-acid sequence, 413 residues long: Histidinol-phosphate aminotransferase, chloroplastic (413 aa).

A chloroplast-targeting transit peptide spans Met-1–Met-35. N6-(pyridoxal phosphate)lysine is present on Lys-273.

This sequence belongs to the class-II pyridoxal-phosphate-dependent aminotransferase family. Histidinol-phosphate aminotransferase subfamily. As to quaternary structure, homodimer. The cofactor is pyridoxal 5'-phosphate. Mainly expressed in green tissues.

It localises to the plastid. The protein resides in the chloroplast. It catalyses the reaction L-histidinol phosphate + 2-oxoglutarate = 3-(imidazol-4-yl)-2-oxopropyl phosphate + L-glutamate. It functions in the pathway amino-acid biosynthesis; L-histidine biosynthesis; L-histidine from 5-phospho-alpha-D-ribose 1-diphosphate: step 7/9. This is Histidinol-phosphate aminotransferase, chloroplastic (HPA) from Nicotiana tabacum (Common tobacco).